Reading from the N-terminus, the 196-residue chain is MSEKATEIANLLGPTVESLGLELLGVEYLPAPGGATLRLYIDVPLAEQPDRIINVDDCERVSREVSAQLDVEDPISGNYTLEVSSPGVDRPLFTLDQFARHVGESAKIVLKLAQDGRRRFQGQIVRIDTEAAAVVFSVDGKDVQIGFGNIDKARILPDWVALGLAPQKPNKPGPKKPGHDKKKPSNEPAAGKPRAE.

Residues 164 to 196 form a disordered region; it reads LAPQKPNKPGPKKPGHDKKKPSNEPAAGKPRAE. The span at 173–182 shows a compositional bias: basic residues; sequence GPKKPGHDKK.

This sequence belongs to the RimP family.

Its subcellular location is the cytoplasm. Its function is as follows. Required for maturation of 30S ribosomal subunits. The polypeptide is Ribosome maturation factor RimP (Xanthomonas campestris pv. campestris (strain 8004)).